The chain runs to 121 residues: Small ribosomal subunit protein uS13 (121 aa).

The interval 92–121 is disordered; sequence RKGLPMRGQRTRTNARTRKGPRRAAQALKK.

It belongs to the universal ribosomal protein uS13 family. As to quaternary structure, part of the 30S ribosomal subunit. Forms a loose heterodimer with protein S19. Forms two bridges to the 50S subunit in the 70S ribosome.

In terms of biological role, located at the top of the head of the 30S subunit, it contacts several helices of the 16S rRNA. In the 70S ribosome it contacts the 23S rRNA (bridge B1a) and protein L5 of the 50S subunit (bridge B1b), connecting the 2 subunits; these bridges are implicated in subunit movement. Contacts the tRNAs in the A and P-sites. This is Small ribosomal subunit protein uS13 from Burkholderia cenocepacia (strain ATCC BAA-245 / DSM 16553 / LMG 16656 / NCTC 13227 / J2315 / CF5610) (Burkholderia cepacia (strain J2315)).